The sequence spans 119 residues: Large ribosomal subunit protein bL20 (119 aa).

This sequence belongs to the bacterial ribosomal protein bL20 family.

Binds directly to 23S ribosomal RNA and is necessary for the in vitro assembly process of the 50S ribosomal subunit. It is not involved in the protein synthesizing functions of that subunit. This is Large ribosomal subunit protein bL20 from Clostridium novyi (strain NT).